A 249-amino-acid polypeptide reads, in one-letter code: Triosephosphate isomerase (249 aa).

Substrate contacts are provided by Asn12 and Lys14. Lys14 is subject to N6-acetyllysine. Tyr68 is subject to 3'-nitrotyrosine. Residue Ser80 is modified to Phosphoserine. His96 acts as the Electrophile in catalysis. A Phosphoserine modification is found at Ser106. A Glycyl lysine isopeptide (Lys-Gly) (interchain with G-Cter in SUMO1) cross-link involves residue Lys142. Lys149 is modified (N6-succinyllysine). The residue at position 156 (Lys156) is an N6-acetyllysine; alternate. N6-succinyllysine; alternate is present on Lys156. Position 159 is a phosphoserine (Ser159). Glu166 serves as the catalytic Proton acceptor. Thr173 is modified (phosphothreonine). The residue at position 194 (Lys194) is an N6-acetyllysine; alternate. Lys194 carries the post-translational modification N6-succinyllysine; alternate. An N6-methyllysine; alternate modification is found at Lys194. Residue Ser198 is modified to Phosphoserine. A 3'-nitrotyrosine modification is found at Tyr209. Ser212 carries the post-translational modification Phosphoserine. Thr214 carries the post-translational modification Phosphothreonine. Position 223 is a phosphoserine (Ser223). The residue at position 238 (Lys238) is an N6-acetyllysine.

It belongs to the triosephosphate isomerase family. As to quaternary structure, homodimer.

The protein localises to the cytoplasm. It carries out the reaction dihydroxyacetone phosphate = methylglyoxal + phosphate. The enzyme catalyses D-glyceraldehyde 3-phosphate = dihydroxyacetone phosphate. It functions in the pathway carbohydrate degradation; glycolysis; D-glyceraldehyde 3-phosphate from glycerone phosphate: step 1/1. It participates in carbohydrate biosynthesis; gluconeogenesis. Triosephosphate isomerase is an extremely efficient metabolic enzyme that catalyzes the interconversion between dihydroxyacetone phosphate (DHAP) and D-glyceraldehyde-3-phosphate (G3P) in glycolysis and gluconeogenesis. In terms of biological role, it is also responsible for the non-negligible production of methylglyoxal a reactive cytotoxic side-product that modifies and can alter proteins, DNA and lipids. The chain is Triosephosphate isomerase (TPI1) from Bos taurus (Bovine).